The primary structure comprises 258 residues: Short-chain dehydrogenase/reductase aba4 (258 aa).

3 residues coordinate NADP(+): isoleucine 20, aspartate 66, and lysine 130. Active-site proton donor residues include serine 146 and tyrosine 160. The NADP(+) site is built by tyrosine 160, lysine 164, isoleucine 193, and threonine 195. The active-site Lowers pKa of active site Tyr is the lysine 164.

The protein belongs to the short-chain dehydrogenases/reductases (SDR) family.

It functions in the pathway hormone biosynthesis. Functionally, short-chain dehydrogenase/reductase; part of the gene cluster that mediates the biosynthesis of abscisic acid (ABA), a phytohormone that acts antagonistically toward salicylic acid (SA), jasmonic acid (JA) and ethylene (ETH) signaling, to impede plant defense responses. The first step of the pathway catalyzes the reaction from farnesyl diphosphate to alpha-ionylideneethane performed by the alpha-ionylideneethane synthase aba3 via a three-step reaction mechanism involving 2 neutral intermediates, beta-farnesene and allofarnesene. The cytochrome P450 monooxygenase aba1 might then be involved in the conversion of alpha-ionylideneethane to alpha-ionylideneacetic acid. Alpha-ionylideneacetic acid is further converted to abscisic acid in 2 steps involving the cytochrome P450 monooxygenase aba2 and the short-chain dehydrogenase/reductase aba4, via the intermediates 1'-deoxy-ABA or 1',4'-trans-diol-ABA, depending on the order of action of these 2 enzymes. Aba2 is responsible for the hydroxylation of carbon atom C-1' and aba4 might be involved in the oxidation of the C-4' carbon atom. The polypeptide is Short-chain dehydrogenase/reductase aba4 (Botryotinia fuckeliana (strain B05.10) (Noble rot fungus)).